The sequence spans 389 residues: Glutamate 5-kinase (389 aa).

Position 26 (lysine 26) interacts with ATP. The substrate site is built by serine 66, aspartate 153, and asparagine 167. 187 to 188 (TD) serves as a coordination point for ATP. One can recognise a PUA domain in the interval 293–371 (AGTLFLDQGA…EQIEWILGHR (79 aa)).

This sequence belongs to the glutamate 5-kinase family.

It is found in the cytoplasm. The enzyme catalyses L-glutamate + ATP = L-glutamyl 5-phosphate + ADP. Its pathway is amino-acid biosynthesis; L-proline biosynthesis; L-glutamate 5-semialdehyde from L-glutamate: step 1/2. Functionally, catalyzes the transfer of a phosphate group to glutamate to form L-glutamate 5-phosphate. The chain is Glutamate 5-kinase from Rhodopirellula baltica (strain DSM 10527 / NCIMB 13988 / SH1).